We begin with the raw amino-acid sequence, 184 residues long: Adenylate kinase 1 (184 aa).

ATP is bound at residue 11-16 (GAGKGT). The tract at residues 31 to 60 (STGDILRQAMKEQTPLGIKAQSYVDSGELV) is NMP. Residues Thr32, Arg37, 58–60 (ELV), 86–89 (GFPR), and Gln93 contribute to the AMP site. Residues 127-133 (SRGRKDD) are LID. Residue Arg128 coordinates ATP. Positions 130 and 141 each coordinate AMP. ATP is bound at residue Gln169.

This sequence belongs to the adenylate kinase family. In terms of assembly, monomer.

The protein resides in the cytoplasm. It catalyses the reaction AMP + ATP = 2 ADP. Its pathway is purine metabolism; AMP biosynthesis via salvage pathway; AMP from ADP: step 1/1. In terms of biological role, catalyzes the reversible transfer of the terminal phosphate group between ATP and AMP. Plays an important role in cellular energy homeostasis and in adenine nucleotide metabolism. The polypeptide is Adenylate kinase 1 (Nostoc sp. (strain PCC 7120 / SAG 25.82 / UTEX 2576)).